The sequence spans 179 residues: MRRPNKAPPAASKDGPRINDDIRNAQIQLIDQTGDNKGTVETVVAIKMAQEAGMDLVEISPNTSPPVCKIMDYGKYKYSAQKKAAEARKRQKTVEIKEIKLRPMIDDHDYDVKMRAMQRFFEEGDKVKITLRYRGREMAHQEIGTKLLDKIKTDVAELAKVEQDARFEGRQVVMVLAPR.

Belongs to the IF-3 family. Monomer.

It localises to the cytoplasm. Functionally, IF-3 binds to the 30S ribosomal subunit and shifts the equilibrium between 70S ribosomes and their 50S and 30S subunits in favor of the free subunits, thus enhancing the availability of 30S subunits on which protein synthesis initiation begins. This is Translation initiation factor IF-3 from Bradyrhizobium diazoefficiens (strain JCM 10833 / BCRC 13528 / IAM 13628 / NBRC 14792 / USDA 110).